The primary structure comprises 125 residues: Small ribosomal subunit protein uS13 (125 aa).

The disordered stretch occupies residues 95–125; it reads GLPVNGQRTRTNARTRKGGKKTVANKKKVTK. Residues 105–125 show a composition bias toward basic residues; that stretch reads TNARTRKGGKKTVANKKKVTK.

This sequence belongs to the universal ribosomal protein uS13 family. In terms of assembly, part of the 30S ribosomal subunit. Forms a loose heterodimer with protein S19. Forms two bridges to the 50S subunit in the 70S ribosome.

Located at the top of the head of the 30S subunit, it contacts several helices of the 16S rRNA. In the 70S ribosome it contacts the 23S rRNA (bridge B1a) and protein L5 of the 50S subunit (bridge B1b), connecting the 2 subunits; these bridges are implicated in subunit movement. Contacts the tRNAs in the A and P-sites. This chain is Small ribosomal subunit protein uS13, found in Leptospira borgpetersenii serovar Hardjo-bovis (strain L550).